The primary structure comprises 140 residues: MAKKITAKVKLQLPAGSANPSPPVGPALGQHGVNIMEFCKAFNAKTMEQKGTIIPALITIYADRSFTFITKTPPASVLLVKAAKIDKGSGEPNKNKVGKVTAAQIEEIAKLKMVDMTAKDLEAACRTISGTARSMGIEIV.

Belongs to the universal ribosomal protein uL11 family. Part of the ribosomal stalk of the 50S ribosomal subunit. Interacts with L10 and the large rRNA to form the base of the stalk. L10 forms an elongated spine to which L12 dimers bind in a sequential fashion forming a multimeric L10(L12)X complex. One or more lysine residues are methylated.

Forms part of the ribosomal stalk which helps the ribosome interact with GTP-bound translation factors. The polypeptide is Large ribosomal subunit protein uL11 (Solidesulfovibrio magneticus (strain ATCC 700980 / DSM 13731 / RS-1) (Desulfovibrio magneticus)).